A 76-amino-acid polypeptide reads, in one-letter code: Serine proteinase inhibitor IA-1 (76 aa).

N-acetylserine is present on serine 1.

The protein belongs to the protease inhibitor I9 family.

Functionally, specifically inhibits an endogenous intracellular serine proteinase (proteinase A). The polypeptide is Serine proteinase inhibitor IA-1 (Pleurotus ostreatus (Oyster mushroom)).